We begin with the raw amino-acid sequence, 439 residues long: Glutamine synthetase (439 aa).

One can recognise a GS beta-grasp domain in the interval 12–93 (SKIKFVQLVF…VYGFIYKDNK (82 aa)). The GS catalytic domain maps to 99 to 439 (PRGILKRALE…EWELERYFFL (341 aa)). Positions 122 and 124 each coordinate Mg(2+). Glu-172 is an ATP binding site. 2 residues coordinate Mg(2+): Glu-177 and Glu-184. Gly-229 provides a ligand contact to L-glutamate. Residue His-233 coordinates Mg(2+). ATP contacts are provided by residues 235 to 237 (HIS) and Ser-237. Residues Arg-283, Glu-289, and Arg-301 each contribute to the L-glutamate site. Residues Arg-301, Arg-306, and Lys-313 each contribute to the ATP site. Glu-318 serves as a coordination point for Mg(2+). Arg-320 contributes to the L-glutamate binding site.

This sequence belongs to the glutamine synthetase family. As to quaternary structure, oligomer of 12 subunits arranged in the form of two hexagons. The cofactor is Mg(2+).

It is found in the cytoplasm. The enzyme catalyses L-glutamate + NH4(+) + ATP = L-glutamine + ADP + phosphate + H(+). Probably involved in nitrogen metabolism via ammonium assimilation. Catalyzes the ATP-dependent biosynthesis of glutamine from glutamate and ammonia. This chain is Glutamine synthetase, found in Pyrococcus furiosus (strain ATCC 43587 / DSM 3638 / JCM 8422 / Vc1).